Consider the following 130-residue polypeptide: Protein PELPK2 (130 aa).

A signal peptide spans 1 to 32; the sequence is MTLKKSFSASLLSPFLIICLIALLSVPVSVGA. A run of 13 repeats spans residues 47 to 51, 52 to 56, 58 to 62, 63 to 67, 69 to 73, 74 to 78, 80 to 84, 91 to 95, 97 to 101, 102 to 106, 108 to 112, 113 to 117, and 121 to 125. The 13 X 5 AA tandem repeat of P-[DEGQ]-[AEFLIV]-[QPT]-K stretch occupies residues 47 to 125; sequence PELPKPEMPK…TKVPAFTMPK (79 aa). Residues 71 to 84 show a composition bias toward basic and acidic residues; the sequence is IPKPEMPKLPEIQK. A disordered region spans residues 71–130; that stretch reads IPKPEMPKLPEIQKPELPTFPELPKMPEFPKFDFPKLPELPKPEETKVPAFTMPKFPGSP. Residues 98 to 117 are compositionally biased toward basic and acidic residues; sequence EFPKFDFPKLPELPKPEETK.

It is found in the secreted. Its subcellular location is the cell wall. This Arabidopsis thaliana (Mouse-ear cress) protein is Protein PELPK2.